The sequence spans 113 residues: Beta-microseminoprotein (113 aa).

The signal sequence occupies residues 1–20 (MKARLGSLLVLATLVTASNA). Cystine bridges form between Cys-22-Cys-69, Cys-38-Cys-61, Cys-56-Cys-92, Cys-59-Cys-68, and Cys-83-Cys-106.

This sequence belongs to the beta-microseminoprotein family. Homodimer; Interacts with PI16.

The protein localises to the secreted. This Rattus norvegicus (Rat) protein is Beta-microseminoprotein (Msmb).